The sequence spans 443 residues: ATP-dependent protease ATPase subunit HslU (443 aa).

ATP is bound by residues isoleucine 18, 60-65 (GVGKTE), aspartate 256, glutamate 321, and arginine 393.

Belongs to the ClpX chaperone family. HslU subfamily. As to quaternary structure, a double ring-shaped homohexamer of HslV is capped on each side by a ring-shaped HslU homohexamer. The assembly of the HslU/HslV complex is dependent on binding of ATP.

The protein localises to the cytoplasm. ATPase subunit of a proteasome-like degradation complex; this subunit has chaperone activity. The binding of ATP and its subsequent hydrolysis by HslU are essential for unfolding of protein substrates subsequently hydrolyzed by HslV. HslU recognizes the N-terminal part of its protein substrates and unfolds these before they are guided to HslV for hydrolysis. The sequence is that of ATP-dependent protease ATPase subunit HslU from Pectobacterium carotovorum subsp. carotovorum (strain PC1).